We begin with the raw amino-acid sequence, 440 residues long: Sialyltransferase-like protein 2 (440 aa).

Residues 1-5 lie on the Cytoplasmic side of the membrane; that stretch reads MKLLH. Residues 6-26 form a helical; Signal-anchor for type II membrane protein membrane-spanning segment; sequence LIFLLALTTGISAVLIYIIGV. Residues 27–440 lie on the Lumenal side of the membrane; sequence SNLYESNRFT…HGQLCITPAD (414 aa). N-linked (GlcNAc...) asparagine glycans are attached at residues asparagine 113 and asparagine 149.

Belongs to the glycosyltransferase 29 family.

It is found in the golgi apparatus membrane. May be involved in the transfer of 2-keto-3-deoxy-D-lyxo-heptulosaric acid (Dha) and/or 2-keto-3-deoxy-D-manno-octulosonic acid (Kdo) on the homogalacturonan backbone of rhamnogalacturonan-II. Required for efficient pollen grain germination and pollen tube elongation. Does not possess sialyltransferase activity in vitro. The chain is Sialyltransferase-like protein 2 from Arabidopsis thaliana (Mouse-ear cress).